The primary structure comprises 125 residues: MARIASVNIPDSKRLVVSLTYIYGLGPTMAAEICNKAKISKDKKVKELTDQELISLRNIIESEYKVEGDLRREVTLNIKKKKDIRCYQGLRHIRKLPVRGQNTHSNARTRKGKAIAIAGKKKTVK.

This sequence belongs to the universal ribosomal protein uS13 family. As to quaternary structure, part of the 30S ribosomal subunit. Forms a loose heterodimer with protein S19. Forms two bridges to the 50S subunit in the 70S ribosome.

Functionally, located at the top of the head of the 30S subunit, it contacts several helices of the 16S rRNA. In the 70S ribosome it contacts the 23S rRNA (bridge B1a) and protein L5 of the 50S subunit (bridge B1b), connecting the 2 subunits; these bridges are implicated in subunit movement. Contacts the tRNAs in the A and P-sites. The sequence is that of Small ribosomal subunit protein uS13 from Rickettsia massiliae (strain Mtu5).